The chain runs to 283 residues: Elongation factor Ts (283 aa).

The tract at residues 84–87 is involved in Mg(2+) ion dislocation from EF-Tu; the sequence is TDFV.

It belongs to the EF-Ts family.

The protein resides in the cytoplasm. Associates with the EF-Tu.GDP complex and induces the exchange of GDP to GTP. It remains bound to the aminoacyl-tRNA.EF-Tu.GTP complex up to the GTP hydrolysis stage on the ribosome. This is Elongation factor Ts from Bifidobacterium longum (strain DJO10A).